The chain runs to 226 residues: 2-C-methyl-D-erythritol 4-phosphate cytidylyltransferase (226 aa).

Belongs to the IspD/TarI cytidylyltransferase family. IspD subfamily.

It catalyses the reaction 2-C-methyl-D-erythritol 4-phosphate + CTP + H(+) = 4-CDP-2-C-methyl-D-erythritol + diphosphate. It participates in isoprenoid biosynthesis; isopentenyl diphosphate biosynthesis via DXP pathway; isopentenyl diphosphate from 1-deoxy-D-xylulose 5-phosphate: step 2/6. Functionally, catalyzes the formation of 4-diphosphocytidyl-2-C-methyl-D-erythritol from CTP and 2-C-methyl-D-erythritol 4-phosphate (MEP). The sequence is that of 2-C-methyl-D-erythritol 4-phosphate cytidylyltransferase from Parasynechococcus marenigrum (strain WH8102).